A 188-amino-acid chain; its full sequence is UPF0200 protein M1627_1244 (188 aa).

An ATP-binding site is contributed by 15–22; sequence GMPGSGKS.

The protein belongs to the UPF0200 family.

The polypeptide is UPF0200 protein M1627_1244 (Saccharolobus islandicus (strain M.16.27) (Sulfolobus islandicus)).